The chain runs to 194 residues: Large ribosomal subunit protein eL15 (194 aa).

Residues 164-194 (SAGKKGRGLRNKGKGAEKVRPSVRANKGKTK) form a disordered region. Over residues 167–176 (KKGRGLRNKG) the composition is skewed to basic residues.

This sequence belongs to the eukaryotic ribosomal protein eL15 family.

This chain is Large ribosomal subunit protein eL15, found in Thermococcus gammatolerans (strain DSM 15229 / JCM 11827 / EJ3).